The chain runs to 145 residues: MGCGGSRADAIEPRYYESWTRETESTWLTYTDSDALPSAAATDSGPEAGGLHAGVLEDGPSSNGVLRPAAPGGIANPEKKMNCGTQCPNSQSLSSGPLTQKQNGLWTTEAKRDAKRMSAREVAISVTENIRQMDRSKRVTKNCIN.

Gly2 carries the N-myristoyl glycine lipid modification. Cys3 is lipidated: S-palmitoyl cysteine. An interaction with CAMK2A region spans residues 3–35 (CGGSRADAIEPRYYESWTRETESTWLTYTDSDA). Residues 36–113 (LPSAAATDSG…GLWTTEAKRD (78 aa)) are disordered. A compositionally biased stretch (polar residues) spans 83–106 (CGTQCPNSQSLSSGPLTQKQNGLW).

In terms of assembly, interacts with CAMK2A. Post-translationally, palmitoylation and myristoylation target the protein to the lipid rafts. In terms of tissue distribution, predominantly expressed in the brain (at protein level). Within the brain, found in most of forebrain structures, including the cerebral cortex, hippocampal formation, olfactory bulb, anterior olfactory nuclei, piriform cortex, tenia tecta and amygdaloid nuclei. Not detected in glial cells.

The protein resides in the cytoplasm. It is found in the synapse. The protein localises to the synaptosome. Its subcellular location is the membrane raft. It localises to the postsynaptic density. May play a synaptic role at the postsynaptic lipid rafts possibly through interaction with CAMK2A. This chain is Brain and acute leukemia cytoplasmic protein (Baalc), found in Rattus norvegicus (Rat).